Here is a 252-residue protein sequence, read N- to C-terminus: Carboxymethylenebutenolidase (252 aa).

The tract at residues 1–28 (MCHNKSSAPPTPAHISIQQNRTPGTDPV) is disordered. Active-site residues include Cys126, Asp183, and His214.

The protein belongs to the dienelactone hydrolase family.

It carries out the reaction 2-(5-oxo-2,5-dihydrofuran-2-ylidene)acetate + H2O = 4-oxohex-2-enedioate + H(+). The protein operates within aromatic compound metabolism; 3-chlorocatechol degradation. Its function is as follows. Ring cleavage of cyclic ester dienelactone to produce maleylacetate. This Rhodococcus opacus (Nocardia opaca) protein is Carboxymethylenebutenolidase (clcD).